We begin with the raw amino-acid sequence, 523 residues long: Fidgetin-like protein 1 (523 aa).

The segment at 114 to 154 is disordered; it reads PVQQAVKSRPEGQFPESRNNSTKKIDAQQYSSESSSQSGFG. A compositionally biased stretch (low complexity) spans 141-151; it reads QQYSSESSSQS. Residues alanine 253 and 293 to 298 each bind ATP; that span reads GTGKTL.

The protein belongs to the AAA ATPase family. In terms of assembly, hexamer. The cofactor is Mg(2+).

The enzyme catalyses ATP + H2O = ADP + phosphate + H(+). The sequence is that of Fidgetin-like protein 1 from Drosophila melanogaster (Fruit fly).